Here is a 767-residue protein sequence, read N- to C-terminus: 5-methyltetrahydropteroyltriglutamate--homocysteine methyltransferase (767 aa).

5-methyltetrahydropteroyltri-L-glutamate contacts are provided by residues 17-20 (RELK) and Lys117. L-homocysteine is bound by residues 441-443 (IGS) and Glu494. L-methionine is bound by residues 441-443 (IGS) and Glu494. Residues 525 to 526 (RC) and Trp571 each bind 5-methyltetrahydropteroyltri-L-glutamate. Asp609 is a binding site for L-homocysteine. Residue Asp609 participates in L-methionine binding. Position 615 (Glu615) interacts with 5-methyltetrahydropteroyltri-L-glutamate. Zn(2+)-binding residues include His652, Cys654, and Glu676. Residue His705 is the Proton donor of the active site. Residue Cys737 coordinates Zn(2+).

It belongs to the vitamin-B12 independent methionine synthase family. Zn(2+) serves as cofactor.

The enzyme catalyses 5-methyltetrahydropteroyltri-L-glutamate + L-homocysteine = tetrahydropteroyltri-L-glutamate + L-methionine. It functions in the pathway amino-acid biosynthesis; L-methionine biosynthesis via de novo pathway; L-methionine from L-homocysteine (MetE route): step 1/1. Its function is as follows. Catalyzes the transfer of a methyl group from 5-methyltetrahydrofolate to homocysteine resulting in methionine formation. The sequence is that of 5-methyltetrahydropteroyltriglutamate--homocysteine methyltransferase from Bifidobacterium longum subsp. infantis (strain ATCC 15697 / DSM 20088 / JCM 1222 / NCTC 11817 / S12).